The primary structure comprises 143 residues: uncharacterized protein (143 aa).

A disordered region spans residues 111–143 (VTQDISHTSGKSPTPKAKSSSPKKSKKKNWIPL). Residues 119–130 (SGKSPTPKAKSS) show a composition bias toward low complexity. Residues 131–143 (SPKKSKKKNWIPL) are compositionally biased toward basic residues.

It belongs to the chlamydial CPn_0742/CT_635/TC_0003 family.

This is an uncharacterized protein from Chlamydia muridarum (strain MoPn / Nigg).